The following is a 444-amino-acid chain: Signal recognition particle 54 kDa protein (444 aa).

GTP-binding positions include 102–109, 184–188, and 244–247; these read GVQGSGKT, DTAGR, and SKMD.

This sequence belongs to the GTP-binding SRP family. SRP54 subfamily. Part of the signal recognition particle protein translocation system, which is composed of SRP and FtsY. Archaeal SRP consists of a 7S RNA molecule of 300 nucleotides and two protein subunits: SRP54 and SRP19.

It localises to the cytoplasm. The catalysed reaction is GTP + H2O = GDP + phosphate + H(+). In terms of biological role, involved in targeting and insertion of nascent membrane proteins into the cytoplasmic membrane. Binds to the hydrophobic signal sequence of the ribosome-nascent chain (RNC) as it emerges from the ribosomes. The SRP-RNC complex is then targeted to the cytoplasmic membrane where it interacts with the SRP receptor FtsY. This Sulfolobus acidocaldarius (strain ATCC 33909 / DSM 639 / JCM 8929 / NBRC 15157 / NCIMB 11770) protein is Signal recognition particle 54 kDa protein.